We begin with the raw amino-acid sequence, 672 residues long: DNA-directed RNA polymerase subunit gamma (672 aa).

Positions 70, 72, 85, and 88 each coordinate Zn(2+). Mg(2+) is bound by residues D466, D468, and D470.

The protein belongs to the RNA polymerase beta' chain family. RpoC1 subfamily. As to quaternary structure, in cyanobacteria the RNAP catalytic core is composed of 2 alpha, 1 beta, 1 beta', 1 gamma and 1 omega subunit. When a sigma factor is associated with the core the holoenzyme is formed, which can initiate transcription. The cofactor is Mg(2+). Requires Zn(2+) as cofactor.

It catalyses the reaction RNA(n) + a ribonucleoside 5'-triphosphate = RNA(n+1) + diphosphate. In terms of biological role, DNA-dependent RNA polymerase catalyzes the transcription of DNA into RNA using the four ribonucleoside triphosphates as substrates. The sequence is that of DNA-directed RNA polymerase subunit gamma from Trichodesmium erythraeum (strain IMS101).